Here is a 222-residue protein sequence, read N- to C-terminus: Uracil-DNA glycosylase (222 aa).

Asp61 acts as the Proton acceptor in catalysis.

This sequence belongs to the uracil-DNA glycosylase (UDG) superfamily. UNG family.

The protein localises to the cytoplasm. The enzyme catalyses Hydrolyzes single-stranded DNA or mismatched double-stranded DNA and polynucleotides, releasing free uracil.. Functionally, excises uracil residues from the DNA which can arise as a result of misincorporation of dUMP residues by DNA polymerase or due to deamination of cytosine. This is Uracil-DNA glycosylase from Aeromonas hydrophila subsp. hydrophila (strain ATCC 7966 / DSM 30187 / BCRC 13018 / CCUG 14551 / JCM 1027 / KCTC 2358 / NCIMB 9240 / NCTC 8049).